Reading from the N-terminus, the 151-residue chain is Putative pre-16S rRNA nuclease (151 aa).

The protein belongs to the YqgF nuclease family.

It is found in the cytoplasm. In terms of biological role, could be a nuclease involved in processing of the 5'-end of pre-16S rRNA. In Thermosynechococcus vestitus (strain NIES-2133 / IAM M-273 / BP-1), this protein is Putative pre-16S rRNA nuclease.